The chain runs to 615 residues: Nuclear receptor subfamily 1 group D member 1 (615 aa).

Polar residues predominate over residues 1 to 12 (MTTLDSNNNTGG). Positions 1-70 (MTTLDSNNNT…TQDPARSFGT (70 aa)) are required for phosphorylation by CSNK1E and cytoplasmic localization. The interval 1–120 (MTTLDSNNNT…SSRVSPSKGT (120 aa)) is disordered. Positions 1–129 (MTTLDSNNNT…TSNITKLNGM (129 aa)) are modulating. Low complexity predominate over residues 14–34 (ITYIGSSGSSPSRTSPESLYS). Polar residues predominate over residues 35 to 48 (DSSNGSFQSLTQGC). The crucial for activation of GJA1 stretch occupies residues 49–285 (PTYFPPSPTG…PPRSPSPEPT (237 aa)). Phosphoserine; by GSK3-beta occurs at positions 55 and 59. Low complexity predominate over residues 72-103 (PPSLSDDSSPSSASSSSSSSSSSFYNGSPPGS). A DNA-binding region (nuclear receptor) is located at residues 130–206 (VLLCKVCGDV…VGMSRDAVRF (77 aa)). 2 consecutive NR C4-type zinc fingers follow at residues 133–153 (CKVC…CEGC) and 170–194 (CLKN…FKKC). N6-acetyllysine; by KAT5 occurs at positions 192 and 193. Disordered stretches follow at residues 235–287 (LCPL…PTVE), 312–337 (PGNF…SQGC), and 357–385 (NGLR…PNSN). A compositionally biased stretch (pro residues) spans 253 to 262 (PSPPPAPAPT). At threonine 275 the chain carries Phosphothreonine; by CDK1. Residues 285 to 615 (TVEDVISQVA…KLLSFRVDAQ (331 aa)) enclose the NR LBD domain. Residue lysine 401 is modified to N6-acetyllysine. Cysteine 419 is a binding site for heme. Lysine 592 carries the N6-acetyllysine modification. Residue histidine 603 coordinates heme.

The protein belongs to the nuclear hormone receptor family. NR1 subfamily. Binds DNA as a monomer or a homodimer. Interacts with C1D, NR2E3, SP1 and ZNHIT1. Interacts with OPHN1 (via C-terminus). Interacts with PER2; the interaction associates PER2 to BMAL1 promoter region. Interacts with CRY1. Interacts with CCAR2. Interacts with SIAH2. Interacts with FBXW7 and CDK1. Interacts with HUWE1. Interacts with NR0B2. Interacts with NFIL3. Interacts (via domain NR LBD) with HSP90AA1 and HSP90AB1. Post-translationally, ubiquitinated, leading to its proteasomal degradation. Ubiquitinated by the SCF(FBXW7) complex when phosphorylated by CDK1 leading to its proteasomal degradation. Ubiquitinated by SIAH2; leading to its proteasomal degradation. Rapidly ubiquitinated in response to inflammatory triggers and sumoylation is a prerequisite to its ubiquitination. Sumoylated by UBE2I, desumoylated by SENP1, and sumoylation is a prerequisite to its ubiquitination. In terms of processing, phosphorylated by CSNK1E; phosphorylation enhances its cytoplasmic localization. Post-translationally, undergoes lysosome-mediated degradation in a time-dependent manner in the liver.

Its subcellular location is the nucleus. It is found in the cytoplasm. It localises to the cell projection. The protein resides in the dendrite. The protein localises to the dendritic spine. Its function is as follows. Transcriptional repressor which coordinates circadian rhythm and metabolic pathways in a heme-dependent manner. Integral component of the complex transcription machinery that governs circadian rhythmicity and forms a critical negative limb of the circadian clock by directly repressing the expression of core clock components BMAL1, CLOCK and CRY1. Also regulates genes involved in metabolic functions, including lipid and bile acid metabolism, adipogenesis, gluconeogenesis and the macrophage inflammatory response. Acts as a receptor for heme which stimulates its interaction with the NCOR1/HDAC3 corepressor complex, enhancing transcriptional repression. Recognizes two classes of DNA response elements within the promoter of its target genes and can bind to DNA as either monomers or homodimers, depending on the nature of the response element. Binds as a monomer to a response element composed of the consensus half-site motif 5'-[A/G]GGTCA-3' preceded by an A/T-rich 5' sequence (RevRE), or as a homodimer to a direct repeat of the core motif spaced by two nucleotides (RevDR-2). Acts as a potent competitive repressor of ROR alpha (RORA) function and regulates the levels of its ligand heme by repressing the expression of PPARGC1A, a potent inducer of heme synthesis. Regulates lipid metabolism by repressing the expression of APOC3 and by influencing the activity of sterol response element binding proteins (SREBPs); represses INSIG2 which interferes with the proteolytic activation of SREBPs which in turn govern the rhythmic expression of enzymes with key functions in sterol and fatty acid synthesis. Regulates gluconeogenesis via repression of G6PC1 and PEPCK and adipocyte differentiation via repression of PPARG. Regulates glucagon release in pancreatic alpha-cells via the AMPK-NAMPT-SIRT1 pathway and the proliferation, glucose-induced insulin secretion and expression of key lipogenic genes in pancreatic-beta cells. Positively regulates bile acid synthesis by increasing hepatic expression of CYP7A1 via repression of NR0B2 and NFIL3 which are negative regulators of CYP7A1. Modulates skeletal muscle oxidative capacity by regulating mitochondrial biogenesis and autophagy; controls mitochondrial biogenesis and respiration by interfering with the STK11-PRKAA1/2-SIRT1-PPARGC1A signaling pathway. Represses the expression of SERPINE1/PAI1, an important modulator of cardiovascular disease and the expression of inflammatory cytokines and chemokines in macrophages. Represses gene expression at a distance in macrophages by inhibiting the transcription of enhancer-derived RNAs (eRNAs). Plays a role in the circadian regulation of body temperature and negatively regulates thermogenic transcriptional programs in brown adipose tissue (BAT); imposes a circadian oscillation in BAT activity, increasing body temperature when awake and depressing thermogenesis during sleep. In concert with NR2E3, regulates transcriptional networks critical for photoreceptor development and function. In addition to its activity as a repressor, can also act as a transcriptional activator. In the ovarian granulosa cells acts as a transcriptional activator of STAR which plays a role in steroid biosynthesis. In collaboration with SP1, activates GJA1 transcription in a heme-independent manner. Represses the transcription of CYP2B10, CYP4A10 and CYP4A14. Represses the transcription of CES2. Represses and regulates the circadian expression of TSHB in a NCOR1-dependent manner. Negatively regulates the protein stability of NR3C1 and influences the time-dependent subcellular distribution of NR3C1, thereby affecting its transcriptional regulatory activity. Plays a critical role in the circadian control of neutrophilic inflammation in the lung; under resting, non-stress conditions, acts as a rhythmic repressor to limit inflammatory activity whereas in the presence of inflammatory triggers undergoes ubiquitin-mediated degradation thereby relieving inhibition of the inflammatory response. Plays a key role in the circadian regulation of microglial activation and neuroinflammation; suppresses microglial activation through the NF-kappaB pathway in the central nervous system. Plays a role in the regulation of the diurnal rhythms of lipid and protein metabolism in the skeletal muscle via transcriptional repression of genes controlling lipid and amino acid metabolism in the muscle. The polypeptide is Nuclear receptor subfamily 1 group D member 1 (Nr1d1) (Rattus norvegicus (Rat)).